Here is a 269-residue protein sequence, read N- to C-terminus: 1-(5-phosphoribosyl)-5-[(5-phosphoribosylamino)methylideneamino] imidazole-4-carboxamide isomerase (269 aa).

Asp10 serves as the catalytic Proton acceptor. Asp132 serves as the catalytic Proton donor.

Belongs to the HisA/HisF family.

It is found in the cytoplasm. The catalysed reaction is 1-(5-phospho-beta-D-ribosyl)-5-[(5-phospho-beta-D-ribosylamino)methylideneamino]imidazole-4-carboxamide = 5-[(5-phospho-1-deoxy-D-ribulos-1-ylimino)methylamino]-1-(5-phospho-beta-D-ribosyl)imidazole-4-carboxamide. It functions in the pathway amino-acid biosynthesis; L-histidine biosynthesis; L-histidine from 5-phospho-alpha-D-ribose 1-diphosphate: step 4/9. In Xylella fastidiosa (strain Temecula1 / ATCC 700964), this protein is 1-(5-phosphoribosyl)-5-[(5-phosphoribosylamino)methylideneamino] imidazole-4-carboxamide isomerase.